We begin with the raw amino-acid sequence, 81 residues long: Putative membrane protein insertion efficiency factor (81 aa).

The protein belongs to the UPF0161 family.

Its subcellular location is the cell inner membrane. Its function is as follows. Could be involved in insertion of integral membrane proteins into the membrane. The polypeptide is Putative membrane protein insertion efficiency factor (Thermotoga maritima (strain ATCC 43589 / DSM 3109 / JCM 10099 / NBRC 100826 / MSB8)).